A 431-amino-acid polypeptide reads, in one-letter code: Probable prephenate dehydrogenase [NADP(+)] (431 aa).

5-34 (FQVGIIGFGDMGRLYAEYISKAGWRVNVCD) contacts NADP(+). One can recognise a Prephenate/arogenate dehydrogenase domain in the interval 5-285 (FQVGIIGFGD…GENMDRNSSG (281 aa)).

The protein belongs to the prephenate/arogenate dehydrogenase family.

It is found in the cytoplasm. It catalyses the reaction prephenate + NADP(+) = 3-(4-hydroxyphenyl)pyruvate + CO2 + NADPH. The protein operates within amino-acid biosynthesis; L-tyrosine biosynthesis; (4-hydroxyphenyl)pyruvate from prephenate (NADP(+) route): step 1/1. In Schizosaccharomyces pombe (strain 972 / ATCC 24843) (Fission yeast), this protein is Probable prephenate dehydrogenase [NADP(+)] (tyr1).